The primary structure comprises 468 residues: Na(+)/H(+) antiporter (468 aa).

8 helical membrane-spanning segments follow: residues His12–Phe32, Leu36–Ala56, Asp81–Phe96, Ile103–Tyr123, Gly133–Val153, Leu169–Ile189, Trp204–Gly224, and Gly258–Phe278. Asn287 carries N-linked (GlcNAc...) asparagine glycosylation. Residues Val293–Ile313 form a helical membrane-spanning segment. Residue Asn319 is glycosylated (N-linked (GlcNAc...) asparagine). Transmembrane regions (helical) follow at residues Trp320 to Cys340, Ala362 to Ala382, and Ile408 to Ile428. Residues Ser449 and Ser451 each carry the phosphoserine modification.

It belongs to the fungal Na(+)/H(+) exchanger family.

It localises to the cell membrane. Sodium export from cell, takes up external protons in exchange for internal sodium ions. Involved in regulation of pH. The protein is Na(+)/H(+) antiporter of Schizosaccharomyces pombe (strain 972 / ATCC 24843) (Fission yeast).